We begin with the raw amino-acid sequence, 162 residues long: MADSSFDIVSKVERQEVDNALNQAAKEISQRYDFKNVGASIAWSGEKILMQANSEERVKAILDVFETKLIKRGISLKALDAGEPQLSGKEYKIFASIEEGISQENAKKVAKVIRDEGPKGVKAQVQGDELRVSSKSRDDLQAVQALLKGQDFDFALQFVNYR.

It belongs to the YajQ family.

Nucleotide-binding protein. This is Nucleotide-binding protein SAV_4896 from Streptomyces avermitilis (strain ATCC 31267 / DSM 46492 / JCM 5070 / NBRC 14893 / NCIMB 12804 / NRRL 8165 / MA-4680).